Consider the following 122-residue polypeptide: Small ribosomal subunit protein uS13 (122 aa).

The disordered stretch occupies residues 99–122 (RGQRTHTNARTRKGPAKAIAGKKK).

The protein belongs to the universal ribosomal protein uS13 family. Part of the 30S ribosomal subunit. Forms a loose heterodimer with protein S19. Forms two bridges to the 50S subunit in the 70S ribosome.

In terms of biological role, located at the top of the head of the 30S subunit, it contacts several helices of the 16S rRNA. In the 70S ribosome it contacts the 23S rRNA (bridge B1a) and protein L5 of the 50S subunit (bridge B1b), connecting the 2 subunits; these bridges are implicated in subunit movement. Contacts the tRNAs in the A and P-sites. The protein is Small ribosomal subunit protein uS13 of Bradyrhizobium sp. (strain BTAi1 / ATCC BAA-1182).